Reading from the N-terminus, the 134-residue chain is Protein Turandot E (134 aa).

Positions 1-38 (MSYNRTLHSTTSILKMNSALQISCLLLVLGCLLGSGHG) are cleaved as a signal peptide.

This sequence belongs to the Turandot family.

Its subcellular location is the secreted. In terms of biological role, a humoral factor that may play a role in stress tolerance. This chain is Protein Turandot E, found in Drosophila yakuba (Fruit fly).